The following is a 174-amino-acid chain: MTTIVSVRRNNQVVIAGDGQVSLGNTVMKGNAKKVRRLYHNKVLAGFAGSTADAFTLFERFEAKLEMHQGHLMRAAVEMAKDWRSDKVLRKLEALLAVADAESSLIITGNGDVVQPENDLIAIGSGGAFAQSAATALLENTDLSALEIAEKSLTIAGNICVFTNQFKTIEELKY.

The active site involves threonine 2. Positions 157, 160, and 163 each coordinate Na(+).

It belongs to the peptidase T1B family. HslV subfamily. A double ring-shaped homohexamer of HslV is capped on each side by a ring-shaped HslU homohexamer. The assembly of the HslU/HslV complex is dependent on binding of ATP.

It is found in the cytoplasm. The enzyme catalyses ATP-dependent cleavage of peptide bonds with broad specificity.. Its activity is regulated as follows. Allosterically activated by HslU binding. Its function is as follows. Protease subunit of a proteasome-like degradation complex believed to be a general protein degrading machinery. The protein is ATP-dependent protease subunit HslV of Shewanella pealeana (strain ATCC 700345 / ANG-SQ1).